A 339-amino-acid polypeptide reads, in one-letter code: Transcription initiation factor IIB (339 aa).

The TFIIB-type zinc-finger motif lies at Glu-39–Gln-70. Zn(2+)-binding residues include Cys-43, Cys-46, Cys-62, and Cys-65. Tandem repeats lie at residues Ser-156–Leu-239 and Asp-250–Glu-331.

Belongs to the TFIIB family.

In terms of biological role, stabilizes TBP binding to an archaeal box-A promoter. Also responsible for recruiting RNA polymerase II to the pre-initiation complex (DNA-TBP-TFIIB). The polypeptide is Transcription initiation factor IIB (Methanococcus maripaludis (strain C7 / ATCC BAA-1331)).